Reading from the N-terminus, the 242-residue chain is ATP synthase subunit b 2 (242 aa).

The chain crosses the membrane as a helical span at residues 4 to 24 (LLAISSLTLLASLVLLVVSPA). The segment at 43–74 (ADSEDGDHDHDHEGDDHGHDEAAGDEHGHGDG) is disordered. Residues 49–74 (DHDHDHEGDDHGHDEAAGDEHGHGDG) show a composition bias toward basic and acidic residues.

This sequence belongs to the ATPase B chain family. F-type ATPases have 2 components, F(1) - the catalytic core - and F(0) - the membrane proton channel. F(1) has five subunits: alpha(3), beta(3), gamma(1), delta(1), epsilon(1). F(0) has three main subunits: a(1), b(2) and c(10-14). The alpha and beta chains form an alternating ring which encloses part of the gamma chain. F(1) is attached to F(0) by a central stalk formed by the gamma and epsilon chains, while a peripheral stalk is formed by the delta and b chains.

The protein resides in the cell inner membrane. Functionally, f(1)F(0) ATP synthase produces ATP from ADP in the presence of a proton or sodium gradient. F-type ATPases consist of two structural domains, F(1) containing the extramembraneous catalytic core and F(0) containing the membrane proton channel, linked together by a central stalk and a peripheral stalk. During catalysis, ATP synthesis in the catalytic domain of F(1) is coupled via a rotary mechanism of the central stalk subunits to proton translocation. Component of the F(0) channel, it forms part of the peripheral stalk, linking F(1) to F(0). The sequence is that of ATP synthase subunit b 2 from Rhodopirellula baltica (strain DSM 10527 / NCIMB 13988 / SH1).